We begin with the raw amino-acid sequence, 218 residues long: Uridine kinase (218 aa).

16 to 23 (GGSGSGKT) provides a ligand contact to ATP.

The protein belongs to the uridine kinase family.

The protein localises to the cytoplasm. It catalyses the reaction uridine + ATP = UMP + ADP + H(+). It carries out the reaction cytidine + ATP = CMP + ADP + H(+). It participates in pyrimidine metabolism; CTP biosynthesis via salvage pathway; CTP from cytidine: step 1/3. The protein operates within pyrimidine metabolism; UMP biosynthesis via salvage pathway; UMP from uridine: step 1/1. The protein is Uridine kinase of Limosilactobacillus reuteri (strain DSM 20016) (Lactobacillus reuteri).